A 233-amino-acid chain; its full sequence is Uridylate kinase (233 aa).

ATP-binding positions include 8–11 (KLSG), Gly51, and Arg55. UMP-binding positions include Asp68 and 129–136 (TSNPFFTT). The ATP site is built by Thr156, Tyr162, and Asp165.

This sequence belongs to the UMP kinase family. Homohexamer.

It localises to the cytoplasm. The catalysed reaction is UMP + ATP = UDP + ADP. Its pathway is pyrimidine metabolism; CTP biosynthesis via de novo pathway; UDP from UMP (UMPK route): step 1/1. With respect to regulation, inhibited by UTP. Its function is as follows. Catalyzes the reversible phosphorylation of UMP to UDP. The sequence is that of Uridylate kinase from Pseudothermotoga lettingae (strain ATCC BAA-301 / DSM 14385 / NBRC 107922 / TMO) (Thermotoga lettingae).